The primary structure comprises 311 residues: m7GpppX diphosphatase (311 aa).

Substrate-binding positions include E159, K181, and 242 to 253 (HYQPSFYHLHVH). The Histidine triad motif signature appears at 249 to 253 (HLHVH). The Nucleophile role is filled by H251.

Belongs to the HIT family. As to expression, expressed in neurons in the ventral cord, the nerve ring and the pharynx.

Its subcellular location is the nucleus. It catalyses the reaction a 5'-end (N(7)-methyl 5'-triphosphoguanosine)-ribonucleoside in mRNA + H2O = N(7)-methyl-GMP + a 5'-end diphospho-ribonucleoside in mRNA + 2 H(+). It carries out the reaction a 5'-end (N(2),N(2),N(7)-trimethyl 5'-triphosphoguanosine)-ribonucleoside in mRNA + H2O = (N(2),N(2),N(7))-trimethyl-GMP + a 5'-end diphospho-ribonucleoside in mRNA + 2 H(+). Its activity is regulated as follows. The hydrolytic product 7-methylguanosine diphosphate (m7GDP) efficiently inhibits the decapping scavenger activity and acts as a competitive inhibitor in vitro. Decapping scavenger enzyme that catalyzes the cleavage of a residual cap structure following the degradation of mRNAs of the 3'-&gt;5' exosome-mediated mRNA decay pathway. Hydrolyzes cap analog structures like 7-methylguanosine nucleoside triphosphate (m7GpppG) and tri-methyl guanosine nucleoside triphosphate (m3(2,2,7)GpppG) with up to 2 nucleotide substrates (small capped oligoribonucleotides) and specifically releases 5'-phosphorylated RNA fragments and 7-methylguanosine monophosphate (m7GMP). Does not hydrolyze unmethylated cap analog (GpppG) and shows no decapping activity on intact m7GpppG-capped mRNA molecules. Does not hydrolyze 7-methylguanosine diphosphate (m7GDP) and tri-methylguanosine diphosphate (m3(2,2,7)GDP) to m(7)GMP and m3(2,2,7)GMP, respectively. May also play a role in the 5'-&gt;3 mRNA decay pathway; m7GDP, the downstream product released by the 5'-&gt;3' mRNA mediated decapping activity, may be also converted by dcs-1 to m7GMP. Binds to m7GpppG and strongly to m7GDP. The sequence is that of m7GpppX diphosphatase (dcs-1) from Caenorhabditis elegans.